The primary structure comprises 454 residues: Glutamyl-tRNA reductase (454 aa).

Residues 50–53 (TCNR), Ser103, 108–110 (EDQ), and Gln114 contribute to the substrate site. Catalysis depends on Cys51, which acts as the Nucleophile. 182–187 (GAGEMG) serves as a coordination point for NADP(+). The segment at 407-454 (LFDPNFGGDTPQPDRPDDIPRAAERGDISGDDLPDDVPNHIAEKVSDG) is disordered. 2 stretches are compositionally biased toward basic and acidic residues: residues 418–434 (QPDRPDDIPRAAERGDI) and 443–454 (VPNHIAEKVSDG).

It belongs to the glutamyl-tRNA reductase family. In terms of assembly, homodimer.

The catalysed reaction is (S)-4-amino-5-oxopentanoate + tRNA(Glu) + NADP(+) = L-glutamyl-tRNA(Glu) + NADPH + H(+). Its pathway is porphyrin-containing compound metabolism; protoporphyrin-IX biosynthesis; 5-aminolevulinate from L-glutamyl-tRNA(Glu): step 1/2. In terms of biological role, catalyzes the NADPH-dependent reduction of glutamyl-tRNA(Glu) to glutamate 1-semialdehyde (GSA). This chain is Glutamyl-tRNA reductase, found in Haloquadratum walsbyi (strain DSM 16790 / HBSQ001).